The chain runs to 404 residues: Cysteine desulfurase IscS (404 aa).

Residues 75 to 76 (AT), N155, Q183, and 203 to 205 (SAH) contribute to the pyridoxal 5'-phosphate site. An N6-(pyridoxal phosphate)lysine modification is found at K206. T243 provides a ligand contact to pyridoxal 5'-phosphate. Residue C328 is the Cysteine persulfide intermediate of the active site. [2Fe-2S] cluster is bound at residue C328.

It belongs to the class-V pyridoxal-phosphate-dependent aminotransferase family. NifS/IscS subfamily. Homodimer. Forms a heterotetramer with IscU, interacts with other sulfur acceptors. The cofactor is pyridoxal 5'-phosphate.

It localises to the cytoplasm. The catalysed reaction is (sulfur carrier)-H + L-cysteine = (sulfur carrier)-SH + L-alanine. The protein operates within cofactor biosynthesis; iron-sulfur cluster biosynthesis. Master enzyme that delivers sulfur to a number of partners involved in Fe-S cluster assembly, tRNA modification or cofactor biosynthesis. Catalyzes the removal of elemental sulfur atoms from cysteine to produce alanine. Functions as a sulfur delivery protein for Fe-S cluster synthesis onto IscU, an Fe-S scaffold assembly protein, as well as other S acceptor proteins. This is Cysteine desulfurase IscS from Buchnera aphidicola subsp. Schizaphis graminum (strain Sg).